The primary structure comprises 349 residues: Phosphoribosylformylglycinamidine cyclo-ligase (349 aa).

This sequence belongs to the AIR synthase family.

It is found in the cytoplasm. It catalyses the reaction 2-formamido-N(1)-(5-O-phospho-beta-D-ribosyl)acetamidine + ATP = 5-amino-1-(5-phospho-beta-D-ribosyl)imidazole + ADP + phosphate + H(+). It participates in purine metabolism; IMP biosynthesis via de novo pathway; 5-amino-1-(5-phospho-D-ribosyl)imidazole from N(2)-formyl-N(1)-(5-phospho-D-ribosyl)glycinamide: step 2/2. The protein is Phosphoribosylformylglycinamidine cyclo-ligase of Lactobacillus delbrueckii subsp. bulgaricus (strain ATCC 11842 / DSM 20081 / BCRC 10696 / JCM 1002 / NBRC 13953 / NCIMB 11778 / NCTC 12712 / WDCM 00102 / Lb 14).